Consider the following 235-residue polypeptide: Phosphoribosylaminoimidazole-succinocarboxamide synthase (235 aa).

Belongs to the SAICAR synthetase family.

It carries out the reaction 5-amino-1-(5-phospho-D-ribosyl)imidazole-4-carboxylate + L-aspartate + ATP = (2S)-2-[5-amino-1-(5-phospho-beta-D-ribosyl)imidazole-4-carboxamido]succinate + ADP + phosphate + 2 H(+). The protein operates within purine metabolism; IMP biosynthesis via de novo pathway; 5-amino-1-(5-phospho-D-ribosyl)imidazole-4-carboxamide from 5-amino-1-(5-phospho-D-ribosyl)imidazole-4-carboxylate: step 1/2. The polypeptide is Phosphoribosylaminoimidazole-succinocarboxamide synthase (Thermococcus kodakarensis (strain ATCC BAA-918 / JCM 12380 / KOD1) (Pyrococcus kodakaraensis (strain KOD1))).